A 1017-amino-acid chain; its full sequence is Probable calcium-transporting ATPase 8, plasma membrane-type (1017 aa).

Topologically, residues 1–153 (MEKLDRYLQE…FVWDAFQDMT (153 aa)) are cytoplasmic. Transmembrane regions (helical) follow at residues 154-174 (LIIL…TEGW) and 177-197 (GMYD…VTAV). Residues 198-228 (SDYKQSLQFKELDNEKKKIFIHVTRDGRRQK) are Cytoplasmic-facing. Helical transmembrane passes span 229–249 (ISIY…DQVP) and 331–351 (VATV…LVLL). The Cytoplasmic segment spans residues 352 to 384 (VRFLIDKGMTVGLLKWYSTDALTIVNYFATAVT). The chain crosses the membrane as a helical span at residues 385 to 405 (IIVVAVPEGLPLAVTLSLAFA). The active-site 4-aspartylphosphate intermediate is the Asp434. The Mg(2+) site is built by Asp736 and Asp740. Residues 803–823 (IVALVINFVSACITGSAPLTA) traverse the membrane as a helical segment. Residues 824 to 825 (VQ) lie on the Cytoplasmic side of the membrane. The next 2 helical transmembrane spans lie at 826–846 (LLWV…TEPP) and 875–895 (SLYQ…LLNI). At 896 to 938 (KGADSKSIINTLIFNSFVFCQVFNEINSREMQKINVFRGIISN) the chain is on the cytoplasmic side. 2 helical membrane passes run 939–959 (WIFI…IEFL) and 973–993 (WLLS…LKCI). Over 994–1017 (PVGSGETSATPNGYRPLANGPDDI) the chain is Cytoplasmic.

It belongs to the cation transport ATPase (P-type) (TC 3.A.3) family. Type IIB subfamily.

Its subcellular location is the membrane. It catalyses the reaction Ca(2+)(in) + ATP + H2O = Ca(2+)(out) + ADP + phosphate + H(+). With respect to regulation, activated by calmodulin. In terms of biological role, this magnesium-dependent enzyme catalyzes the hydrolysis of ATP coupled with the translocation of calcium from the cytosol out of the cell, into the endoplasmic reticulum, or into organelles. This Oryza sativa subsp. japonica (Rice) protein is Probable calcium-transporting ATPase 8, plasma membrane-type.